The following is a 531-amino-acid chain: Nuclear RNA export factor 3 (531 aa).

Disordered regions lie at residues 33–59 (RSEP…HGAH) and 83–106 (QDQT…GNMP). The segment covering 41-50 (MHSSSHQQQD) has biased composition (polar residues). The segment covering 83 to 102 (QDQTHVNMEREQKPPERRME) has biased composition (basic and acidic residues). The RRM domain occupies 113-192 (WFKITVPFGI…IFVNPAGIPH (80 aa)). Residues 344–494 (LVLQFLQQYY…LCIVNDKLFV (151 aa)) form the NTF2 domain.

It belongs to the NXF family. In terms of assembly, interacts with NXT1, NXT2, E1B-AP5 and CRM1 nuclear export factor. Expressed at high level in testis and at low level in a small number of tissues.

Its subcellular location is the nucleus. The protein localises to the cytoplasm. In terms of biological role, may function as a tissue-specific nuclear mRNA export factor. This chain is Nuclear RNA export factor 3 (NXF3), found in Homo sapiens (Human).